We begin with the raw amino-acid sequence, 297 residues long: Formylmethanofuran--tetrahydromethanopterin formyltransferase (297 aa).

It belongs to the FTR family. As to quaternary structure, homotetramer.

Its subcellular location is the cytoplasm. The enzyme catalyses N-formylmethanofuran + 5,6,7,8-tetrahydromethanopterin + H(+) = N(5)-formyl-5,6,7,8-tetrahydromethanopterin + methanofuran. It participates in metabolic intermediate metabolism; lactate oxidation. Functionally, catalyzes the transfer of a formyl group from 5-formyl tetrahydromethanopterin (5-formyl-H(4)MPT) to methanofuran (MFR) to produce formylmethanofuran (formyl-MFR) and tetrahydromethanopterin (H(4)MPT). This is Formylmethanofuran--tetrahydromethanopterin formyltransferase from Archaeoglobus fulgidus (strain ATCC 49558 / DSM 4304 / JCM 9628 / NBRC 100126 / VC-16).